The primary structure comprises 330 residues: Glycoprotein integral membrane protein 1 (330 aa).

A signal peptide spans 1–23; it reads MEGAPLGPLALRLLLFVALPASG. Residues 24-268 lie on the Extracellular side of the membrane; that stretch reads WLTTGAPEPP…VFPVFFQFLN (245 aa). N-linked (GlcNAc...) asparagine glycosylation is found at N46, N64, N166, and N191. Residues 269–289 form a helical membrane-spanning segment; sequence IMVVGITGAAVVITILKVLFP. Topologically, residues 290–330 are cytoplasmic; sequence VSEYKGILQLDKVDVIPVTAINLYPDGPEKTAENLEDKTCI.

It is found in the membrane. In Pongo abelii (Sumatran orangutan), this protein is Glycoprotein integral membrane protein 1 (GINM1).